We begin with the raw amino-acid sequence, 61 residues long: Small ribosomal subunit protein uS14 (61 aa).

Cys-24, Cys-27, Cys-40, and Cys-43 together coordinate Zn(2+).

This sequence belongs to the universal ribosomal protein uS14 family. Zinc-binding uS14 subfamily. In terms of assembly, part of the 30S ribosomal subunit. Contacts proteins S3 and S10. Zn(2+) is required as a cofactor.

Binds 16S rRNA, required for the assembly of 30S particles and may also be responsible for determining the conformation of the 16S rRNA at the A site. The polypeptide is Small ribosomal subunit protein uS14 (Bifidobacterium adolescentis (strain ATCC 15703 / DSM 20083 / NCTC 11814 / E194a)).